The following is a 151-amino-acid chain: UPF0178 protein Suden_0449 (151 aa).

It belongs to the UPF0178 family.

In Sulfurimonas denitrificans (strain ATCC 33889 / DSM 1251) (Thiomicrospira denitrificans (strain ATCC 33889 / DSM 1251)), this protein is UPF0178 protein Suden_0449.